The chain runs to 253 residues: Complement C1q subcomponent subunit B (253 aa).

Positions 1-25 are cleaved as a signal peptide; that stretch reads MKTQWGEVWTHLLLLLLGFLHVSWA. Gln26 carries the pyrrolidone carboxylic acid modification. The region spanning 29–112 is the Collagen-like domain; that stretch reads CTGPPGIPGI…GPRGPKGDSG (84 aa). Pro33, Pro36, Pro39, Pro51, and Pro54 each carry 4-hydroxyproline. The segment at 35 to 115 is disordered; it reads IPGIPGVPGV…GPKGDSGDYG (81 aa). A 5-hydroxylysine mark is found at Lys57 and Lys60. Pro63 carries the 4-hydroxyproline modification. At Lys75 the chain carries 5-hydroxylysine. Residues 78-96 are compositionally biased toward low complexity; the sequence is PGIPGTPGKVGPKGPVGPK. 4-hydroxyproline occurs at positions 81 and 84. Lys90 and Lys96 each carry 5-hydroxylysine. Residue Pro99 is modified to 4-hydroxyproline. The residue at position 108 (Lys108) is a 5-hydroxylysine. The C1q domain maps to 115 to 253; the sequence is GATQKVAFSA…GFLLFPDMDA (139 aa). A disulfide bridge connects residues Cys179 and Cys198. Ca(2+) is bound by residues Asp199, Tyr200, and Gln206.

Core component of the complement C1 complex, a calcium-dependent complex composed of 1 molecule of the C1Q subcomplex, 2 molecules of C1R and 2 molecules of C1S. The C1Q subcomplex is composed 18 subunits: 3 chains of C1QA, C1QB, and C1QC trimerize to form 6 collagen-like triple helices connected to six globular ligand-recognition modules (C1q domain). Post-translationally, hydroxylated on lysine and proline residues. Hydroxylated lysine residues can be glycosylated. Mouse C1Q contains up to 64.0 hydroxylysine-galactosylglucose residues. Total percentage hydroxylysine residues glycosylated is 95.1%. Contains no hydroxylysine-monosaccharides. In terms of tissue distribution, highest expression in thioglycolate-activated peritoneal macrophages. Also found in spleen, thymus and heart. Very weak expression liver, kidney, lung and intestine.

The protein resides in the secreted. The protein localises to the cell surface. With respect to regulation, the C1Q subcomplex is inhibited by sulfated molecules, such as triterpenoid sulfates, heparan sulfate, or chondroitin sulfates. In terms of biological role, core component of the complement C1 complex, a multiprotein complex that initiates the classical pathway of the complement system, a cascade of proteins that leads to phagocytosis and breakdown of pathogens and signaling that strengthens the adaptive immune system. The classical complement pathway is initiated by the C1Q subcomplex of the C1 complex, which specifically binds IgG or IgM immunoglobulins complexed with antigens, forming antigen-antibody complexes on the surface of pathogens: C1QA, together with C1QB and C1QC, specifically recognizes and binds the Fc regions of IgG or IgM via its C1q domain. Immunoglobulin-binding activates the proenzyme C1R, which cleaves C1S, initiating the proteolytic cascade of the complement system. The C1Q subcomplex is activated by a hexamer of IgG complexed with antigens, while it is activated by a pentameric IgM. The C1Q subcomplex also recognizes and binds phosphatidylserine exposed on the surface of cells undergoing programmed cell death, possibly promoting activation of the complement system. This chain is Complement C1q subcomponent subunit B, found in Mus musculus (Mouse).